Consider the following 72-residue polypeptide: Small ribosomal subunit protein bS18 (72 aa).

This sequence belongs to the bacterial ribosomal protein bS18 family. Part of the 30S ribosomal subunit. Forms a tight heterodimer with protein bS6.

Its function is as follows. Binds as a heterodimer with protein bS6 to the central domain of the 16S rRNA, where it helps stabilize the platform of the 30S subunit. This is Small ribosomal subunit protein bS18 from Francisella philomiragia subsp. philomiragia (strain ATCC 25017 / CCUG 19701 / FSC 153 / O#319-036).